A 2185-amino-acid polypeptide reads, in one-letter code: Genome polyprotein (2185 aa).

Gly2 is lipidated: N-myristoyl glycine; by host. Topologically, residues 2–1495 (GAQVSTQKTG…HVNRAFICLQ (1494 aa)) are cytoplasmic. The interval 566–582 (FFQGPPGEVMGRAIARV) is amphipathic alpha-helix. Active-site for protease 2A activity residues include His872 and Asp890. The Zn(2+) site is built by Cys907 and Cys909. Cys961 functions as the For protease 2A activity in the catalytic mechanism. Zn(2+)-binding residues include Cys967 and His969. Residues 1101–1173 (NSGWLKKFTE…EQSAPSQSDQ (73 aa)) form a membrane-binding region. Residues 1101 to 1239 (NSGWLKKFTE…SPGAGKSVAT (139 aa)) form an oligomerization region. Residues 1122 to 1126 (AIKIQ) are RNA-binding. One can recognise an SF3 helicase domain in the interval 1205-1361 (EKKMSNYIQF…SMYSQNGKIN (157 aa)). Residues Cys1369, Cys1381, and Cys1386 each coordinate Zn(2+). A C4-type; degenerate zinc finger spans residues 1369–1386 (CDEECCPVNFKKCCPLVC). Residues 1413–1420 (EYNHRHSV) are RNA-binding. An oligomerization region spans residues 1424 to 1429 (LEALFQ). Residues 1496-1511 (ALTTFVSVAGIIYIIY) lie within the membrane without spanning it. At 1512–2185 (KLFAGFQGAY…TLRRKWLDSF (674 aa)) the chain is on the cytoplasmic side. Tyr1521 carries the O-(5'-phospho-RNA)-tyrosine modification. Residues 1541-1719 (GPAFEFAVAM…FSAALLRHYF (179 aa)) enclose the Peptidase C3 domain. Catalysis depends on for protease 3C activity residues His1580, Glu1611, and Cys1687. The RdRp catalytic domain maps to 1950-2066 (GHLIAFDYSG…SYPWPIDASL (117 aa)). Mg(2+) is bound by residues Asp1956 and Asp2052.

The protein belongs to the picornaviruses polyprotein family. In terms of assembly, interacts with capsid protein VP1 and capsid protein VP3 to form heterotrimeric protomers. Interacts with capsid protein VP0, and capsid protein VP3 to form heterotrimeric protomers. Five protomers subsequently associate to form pentamers which serve as building blocks for the capsid. Interacts with capsid protein VP2, capsid protein VP3 and capsid protein VP4 following cleavage of capsid protein VP0. Interacts with host CXADR. As to quaternary structure, interacts with capsid protein VP1 and capsid protein VP3 in the mature capsid. In terms of assembly, interacts with capsid protein VP0 and capsid protein VP1 to form heterotrimeric protomers. Five protomers subsequently associate to form pentamers which serve as building blocks for the capsid. Interacts with capsid protein VP4 in the mature capsid. Interacts with protein 2C; this interaction may be important for virion morphogenesis. Interacts with capsid protein VP1 and capsid protein VP3. As to quaternary structure, homodimer. In terms of assembly, homohexamer; forms a hexameric ring structure with 6-fold symmetry characteristic of AAA+ ATPases. Interacts (via N-terminus) with host RTN3 (via reticulon domain); this interaction is important for viral replication. Interacts with capsid protein VP3; this interaction may be important for virion morphogenesis. Interacts with protein 3CD. As to quaternary structure, homodimer. Interacts with host GBF1. Interacts (via GOLD domain) with host ACBD3 (via GOLD domain); this interaction allows the formation of a viral protein 3A/ACBD3 heterotetramer with a 2:2 stoichiometry, which will stimulate the recruitment of host PI4KB in order to synthesize PI4P at the viral RNA replication sites. In terms of assembly, interacts with RNA-directed RNA polymerase. Interacts with protein 3AB and with RNA-directed RNA polymerase. As to quaternary structure, interacts with Viral protein genome-linked and with protein 3CD. Mg(2+) is required as a cofactor. Post-translationally, specific enzymatic cleavages in vivo by the viral proteases yield processing intermediates and the mature proteins. In terms of processing, myristoylation is required for the formation of pentamers during virus assembly. Further assembly of 12 pentamers and a molecule of genomic RNA generates the provirion. During virion maturation, immature virions are rendered infectious following cleavage of VP0 into VP4 and VP2. This maturation seems to be an autocatalytic event triggered by the presence of RNA in the capsid and it is followed by a conformational change infectious virion. Post-translationally, myristoylation is required during RNA encapsidation and formation of the mature virus particle. In terms of processing, VPg is uridylylated by the polymerase into VPg-pUpU. This acts as a nucleotide-peptide primer for the genomic RNA replication.

Its subcellular location is the virion. It is found in the host cytoplasm. It localises to the host cytoplasmic vesicle membrane. The protein localises to the host nucleus. It carries out the reaction a ribonucleoside 5'-triphosphate + H2O = a ribonucleoside 5'-diphosphate + phosphate + H(+). It catalyses the reaction Selective cleavage of Tyr-|-Gly bond in the picornavirus polyprotein.. The enzyme catalyses RNA(n) + a ribonucleoside 5'-triphosphate = RNA(n+1) + diphosphate. The catalysed reaction is Selective cleavage of Gln-|-Gly bond in the poliovirus polyprotein. In other picornavirus reactions Glu may be substituted for Gln, and Ser or Thr for Gly.. Replication or transcription is subject to high level of random mutations by the nucleotide analog ribavirin. Its function is as follows. Forms an icosahedral capsid of pseudo T=3 symmetry with capsid proteins VP2 and VP3. The capsid is 300 Angstroms in diameter, composed of 60 copies of each capsid protein and enclosing the viral positive strand RNA genome. Capsid protein VP1 mainly forms the vertices of the capsid. Capsid protein VP1 interacts with host CXADR to provide virion attachment to target host cells. This attachment induces virion internalization. Tyrosine kinases are probably involved in the entry process. After binding to its receptor, the capsid undergoes conformational changes. Capsid protein VP1 N-terminus (that contains an amphipathic alpha-helix) and capsid protein VP4 are externalized. Together, they shape a pore in the host membrane through which viral genome is translocated to host cell cytoplasm. Functionally, forms an icosahedral capsid of pseudo T=3 symmetry with capsid proteins VP2 and VP3. The capsid is 300 Angstroms in diameter, composed of 60 copies of each capsid protein and enclosing the viral positive strand RNA genome. In terms of biological role, lies on the inner surface of the capsid shell. After binding to the host receptor, the capsid undergoes conformational changes. Capsid protein VP4 is released, Capsid protein VP1 N-terminus is externalized, and together, they shape a pore in the host membrane through which the viral genome is translocated into the host cell cytoplasm. Component of immature procapsids, which is cleaved into capsid proteins VP4 and VP2 after maturation. Allows the capsid to remain inactive before the maturation step. Its function is as follows. Cysteine protease that cleaves viral polyprotein and specific host proteins. It is responsible for the autocatalytic cleavage between the P1 and P2 regions, which is the first cleavage occurring in the polyprotein. Also cleaves the host translation initiation factor EIF4G1, in order to shut down the capped cellular mRNA translation. Inhibits the host nucleus-cytoplasm protein and RNA trafficking by cleaving host members of the nuclear pores. Counteracts stress granule formation probably by antagonizing its assembly or promoting its dissassembly. Functionally, plays an essential role in the virus replication cycle by acting as a viroporin. Creates a pore in the host endoplasmic reticulum and as a consequence releases Ca2+ in the cytoplasm of infected cell. In turn, high levels of cytoplasmic calcium may trigger membrane trafficking and transport of viral ER-associated proteins to viroplasms, sites of viral genome replication. In terms of biological role, induces and associates with structural rearrangements of intracellular membranes. Displays RNA-binding, nucleotide binding and NTPase activities. May play a role in virion morphogenesis and viral RNA encapsidation by interacting with the capsid protein VP3. Localizes the viral replication complex to the surface of membranous vesicles. Together with protein 3CD binds the Cis-Active RNA Element (CRE) which is involved in RNA synthesis initiation. Acts as a cofactor to stimulate the activity of 3D polymerase, maybe through a nucleid acid chaperone activity. Its function is as follows. Localizes the viral replication complex to the surface of membranous vesicles. It inhibits host cell endoplasmic reticulum-to-Golgi apparatus transport and causes the disassembly of the Golgi complex, possibly through GBF1 interaction. This would result in depletion of MHC, trail receptors and IFN receptors at the host cell surface. Plays an essential role in viral RNA replication by recruiting ACBD3 and PI4KB at the viral replication sites, thereby allowing the formation of the rearranged membranous structures where viral replication takes place. Functionally, acts as a primer for viral RNA replication and remains covalently bound to viral genomic RNA. VPg is uridylylated prior to priming replication into VPg-pUpU. The oriI viral genomic sequence may act as a template for this. The VPg-pUpU is then used as primer on the genomic RNA poly(A) by the RNA-dependent RNA polymerase to replicate the viral genome. During genome replication, the VPg-RNA linkage is removed by the host TDP2, thereby accelerating replication. During the late stage of the replication cycle, host TDP2 is excluded from sites of viral RNA synthesis and encapsidation, allowing for the generation of progeny virions. In terms of biological role, involved in the viral replication complex and viral polypeptide maturation. It exhibits protease activity with a specificity and catalytic efficiency that is different from protease 3C. Protein 3CD lacks polymerase activity. Protein 3CD binds to the 5'UTR of the viral genome. Replicates the viral genomic RNA on the surface of intracellular membranes. May form linear arrays of subunits that propagate along a strong head-to-tail interaction called interface-I. Covalently attaches UMP to a tyrosine of VPg, which is used to prime RNA synthesis. The positive stranded RNA genome is first replicated at virus induced membranous vesicles, creating a dsRNA genomic replication form. This dsRNA is then used as template to synthesize positive stranded RNA genomes. ss(+)RNA genomes are either translated, replicated or encapsidated. Its function is as follows. Major viral protease that mediates proteolytic processing of the polyprotein. Cleaves host EIF5B, contributing to host translation shutoff. Also cleaves host PABPC1, contributing to host translation shutoff. Cleaves host NLRP1, triggers host N-glycine-mediated degradation of the autoinhibitory NLRP1 N-terminal fragment. This chain is Genome polyprotein, found in Sus scrofa (Pig).